A 301-amino-acid polypeptide reads, in one-letter code: Ribosomal RNA small subunit methyltransferase H (301 aa).

S-adenosyl-L-methionine contacts are provided by residues 31-33 (GGY), Asp49, Phe76, Asp97, and Gln104.

This sequence belongs to the methyltransferase superfamily. RsmH family.

The protein resides in the cytoplasm. It catalyses the reaction cytidine(1402) in 16S rRNA + S-adenosyl-L-methionine = N(4)-methylcytidine(1402) in 16S rRNA + S-adenosyl-L-homocysteine + H(+). Specifically methylates the N4 position of cytidine in position 1402 (C1402) of 16S rRNA. This Ehrlichia ruminantium (strain Gardel) protein is Ribosomal RNA small subunit methyltransferase H.